The primary structure comprises 283 residues: Bifunctional protein FolD (283 aa).

NADP(+) contacts are provided by residues 165–167 (GAS) and serine 190.

It belongs to the tetrahydrofolate dehydrogenase/cyclohydrolase family. Homodimer.

The enzyme catalyses (6R)-5,10-methylene-5,6,7,8-tetrahydrofolate + NADP(+) = (6R)-5,10-methenyltetrahydrofolate + NADPH. It catalyses the reaction (6R)-5,10-methenyltetrahydrofolate + H2O = (6R)-10-formyltetrahydrofolate + H(+). It participates in one-carbon metabolism; tetrahydrofolate interconversion. Catalyzes the oxidation of 5,10-methylenetetrahydrofolate to 5,10-methenyltetrahydrofolate and then the hydrolysis of 5,10-methenyltetrahydrofolate to 10-formyltetrahydrofolate. In Cupriavidus necator (strain ATCC 17699 / DSM 428 / KCTC 22496 / NCIMB 10442 / H16 / Stanier 337) (Ralstonia eutropha), this protein is Bifunctional protein FolD.